We begin with the raw amino-acid sequence, 347 residues long: Tetraacyldisaccharide 4'-kinase (347 aa).

Residue 54–61 (TVGGAGKT) participates in ATP binding.

The protein belongs to the LpxK family.

The catalysed reaction is a lipid A disaccharide + ATP = a lipid IVA + ADP + H(+). The protein operates within glycolipid biosynthesis; lipid IV(A) biosynthesis; lipid IV(A) from (3R)-3-hydroxytetradecanoyl-[acyl-carrier-protein] and UDP-N-acetyl-alpha-D-glucosamine: step 6/6. Its function is as follows. Transfers the gamma-phosphate of ATP to the 4'-position of a tetraacyldisaccharide 1-phosphate intermediate (termed DS-1-P) to form tetraacyldisaccharide 1,4'-bis-phosphate (lipid IVA). This chain is Tetraacyldisaccharide 4'-kinase, found in Rhizobium etli (strain CIAT 652).